The chain runs to 1014 residues: Pre-mRNA-processing ATP-dependent RNA helicase prp11 (1014 aa).

Positions 1–11 are enriched in basic residues; sequence MSRRTRSRSPP. Positions 1 to 149 are disordered; the sequence is MSRRTRSRSP…SRFDRTERVG (149 aa). Composition is skewed to basic and acidic residues over residues 15–87 and 106–121; these read YNRE…EYAR and RHAEEKEVDNKTKSDE. The Q motif signature appears at 418 to 446; that stretch reads TSWSQCGLSAQTISVINSLGYEKPTSIQA. In terms of domain architecture, Helicase ATP-binding spans 449–627; that stretch reads IPAITSGRDV…RKVLKKPVEI (179 aa). Residue 462–469 coordinates ATP; the sequence is AKTGSGKT. The DEAD box signature appears at 575–578; the sequence is DEAD. The 165-residue stretch at 638 to 802 folds into the Helicase C-terminal domain; the sequence is EVEQIVEVRP…PVPKELQTLA (165 aa). The segment at 815-875 is disordered; sequence KAAGGGFGGK…PEKSTGDPTL (61 aa). 2 stretches are compositionally biased toward basic and acidic residues: residues 827–838 and 855–875; these read SRLDETRNAERK and AEAKSPLEKITPEKSTGDPTL.

The protein belongs to the DEAD box helicase family. DDX46/PRP5 subfamily.

It localises to the nucleus. The enzyme catalyses ATP + H2O = ADP + phosphate + H(+). Functionally, ATP-dependent RNA helicase involved in pre-spliceosome/complex A assembly and mRNA splicing. Bridges U1 and U2 snRNPs during pre-spliceosome assembly and enables stable U2 snRNP association with intron RNA. Through its helicase activity probably catalyzes an ATP-dependent conformational change of U2 snRNP. The sequence is that of Pre-mRNA-processing ATP-dependent RNA helicase prp11 (prp11) from Schizosaccharomyces pombe (strain 972 / ATCC 24843) (Fission yeast).